A 144-amino-acid polypeptide reads, in one-letter code: Large ribosomal subunit protein uL15 (144 aa).

Residues 1 to 57 form a disordered region; that stretch reads MRLNTLSPAPGSKPSAKRVGRGIGSGLGKTCGRGHKGQKSRSGGSVRPGFEGGQMPL. Residues 21-31 show a composition bias toward gly residues; it reads RGIGSGLGKTC.

Belongs to the universal ribosomal protein uL15 family. Part of the 50S ribosomal subunit.

Binds to the 23S rRNA. The protein is Large ribosomal subunit protein uL15 of Photobacterium profundum (strain SS9).